The following is a 364-amino-acid chain: Putative F-box/kelch-repeat protein At1g12170 (364 aa).

The 50-residue stretch at M1 to V50 folds into the F-box domain. Kelch repeat units follow at residues S156 to N205 and C328 to P364.

This is Putative F-box/kelch-repeat protein At1g12170 from Arabidopsis thaliana (Mouse-ear cress).